A 505-amino-acid chain; its full sequence is Nostrin (505 aa).

One can recognise an F-BAR domain in the interval 1-260 (MRDPLTDCSY…AISKIDIEKD (260 aa)). 3 coiled-coil regions span residues 101 to 128 (AHQV…LVIS), 160 to 222 (ITTE…RIQL), and 295 to 332 (KERQ…AYSS). Serine 114 is modified (phosphoserine). The REM-1 domain occupies 292-372 (AMSKERQTSS…SYKLSSVLAE (81 aa)). An SH3 domain is found at 437–496 (LGNGLCKALYPFQARQDDELDLEKGDIVTIHKKKDEGWWFGSLKGKKGHFPAAYVEELPL). At serine 478 the chain carries Phosphoserine.

Homotrimer. Interacts with DAB2. Interacts with NOS3, DNM2, WASL and CAV1. Interacts (via SH3 domain) with DNM2; this interaction allows the recruitment of NOS3 to dynamin-positive structures. In terms of tissue distribution, present in pulmonary arterial endothelial cells (at protein level).

It localises to the cell membrane. It is found in the cytoplasmic vesicle. The protein resides in the cytoplasm. Its subcellular location is the cytoskeleton. In terms of biological role, multivalent adapter protein which may decrease NOS3 activity by inducing its translocation away from the plasma membrane. The sequence is that of Nostrin from Bos taurus (Bovine).